An 87-amino-acid polypeptide reads, in one-letter code: Protein anon-73B1 (87 aa).

A helical membrane pass occupies residues 25-47 (LLIRYGLYVGALFQFVCISAAVL). A disordered region spans residues 52 to 87 (PDVNSNPETGEVTEREGEPVRTRLHKIRKLEKKKRR). Basic and acidic residues predominate over residues 63–72 (VTEREGEPVR). Residues 73-87 (TRLHKIRKLEKKKRR) are compositionally biased toward basic residues.

Belongs to the UPF0239 family.

The protein localises to the membrane. In Drosophila erecta (Fruit fly), this protein is Protein anon-73B1.